The sequence spans 254 residues: Vesicle transport protein USE1 (254 aa).

The Cytoplasmic portion of the chain corresponds to 1–228 (MAYISENELK…AYKCGYDCFK (228 aa)). A helical; Anchor for type IV membrane protein transmembrane segment spans residues 229–249 (VMLIVLIFMSFVSMVLMMKIF). Over 250 to 254 (KKAST) the chain is Lumenal.

The protein belongs to the USE1 family.

It is found in the endoplasmic reticulum membrane. Its function is as follows. SNARE that may be involved in targeting and fusion of Golgi-derived retrograde transport vesicles with the ER. The sequence is that of Vesicle transport protein USE1 from Caenorhabditis elegans.